Reading from the N-terminus, the 115-residue chain is Large ribosomal subunit protein bL20 (115 aa).

This sequence belongs to the bacterial ribosomal protein bL20 family.

Functionally, binds directly to 23S ribosomal RNA and is necessary for the in vitro assembly process of the 50S ribosomal subunit. It is not involved in the protein synthesizing functions of that subunit. This is Large ribosomal subunit protein bL20 from Prochlorococcus marinus (strain NATL2A).